Consider the following 379-residue polypeptide: MGVKGLNQLIKEHAPEAFKEFQLKNLFGRKIAIDASMCLYQFLIAVRQAEGQQLTNDEGETTSHLSGMFYRTIRLVENSIKPVYVFDGKPPVLKGGELEKRLLRREEAIKQRENIKDEGTIEDMVRYEKRTVRVTREQNDEAKKLLELMGVPYVNAPCEAEAQCAELARGGKVFAAASEDMDTICYQPPFLLRHLTFSEARKMPIDQIQYEKVLEALEMDRETFIDLCILLGCDYCETIRGVGPVTAFKLIKEHGSLDKIVEYLTNNPDKTNFKVPEDWPYDEARKLFINPDTIDASEVNLKWKEPDVEGLIQYMVKEKGFSEDRIRSGAEKLKKGLKGGVQGRLDGFFQSVPKPKDSADKKRKNDTKSAKSKKAKTRK.

Positions 1 to 105 (MGVKGLNQLI…GELEKRLLRR (105 aa)) are N-domain. D34 is a Mg(2+) binding site. R47 and R71 together coordinate DNA. D87, E159, E161, D180, and D182 together coordinate Mg(2+). The segment at 123 to 254 (DMVRYEKRTV…VTAFKLIKEH (132 aa)) is I-domain. Residue E159 coordinates DNA. DNA-binding residues include G232 and D234. D234 is a Mg(2+) binding site. An interaction with PCNA region spans residues 341 to 349 (VQGRLDGFF). A disordered region spans residues 344 to 379 (RLDGFFQSVPKPKDSADKKRKNDTKSAKSKKAKTRK). Over residues 361-379 (KKRKNDTKSAKSKKAKTRK) the composition is skewed to basic residues.

This sequence belongs to the XPG/RAD2 endonuclease family. FEN1 subfamily. Interacts with PCNA. Three molecules of FEN1 bind to one PCNA trimer with each molecule binding to one PCNA monomer. PCNA stimulates the nuclease activity without altering cleavage specificity. The cofactor is Mg(2+). Post-translationally, phosphorylated. Phosphorylation upon DNA damage induces relocalization to the nuclear plasma.

The protein localises to the nucleus. It localises to the nucleolus. Its subcellular location is the nucleoplasm. It is found in the mitochondrion. Its function is as follows. Structure-specific nuclease with 5'-flap endonuclease and 5'-3' exonuclease activities involved in DNA replication and repair. During DNA replication, cleaves the 5'-overhanging flap structure that is generated by displacement synthesis when DNA polymerase encounters the 5'-end of a downstream Okazaki fragment. It enters the flap from the 5'-end and then tracks to cleave the flap base, leaving a nick for ligation. Also involved in the long patch base excision repair (LP-BER) pathway, by cleaving within the apurinic/apyrimidinic (AP) site-terminated flap. Acts as a genome stabilization factor that prevents flaps from equilibrating into structures that lead to duplications and deletions. Also possesses 5'-3' exonuclease activity on nicked or gapped double-stranded DNA, and exhibits RNase H activity. Also involved in replication and repair of rDNA and in repairing mitochondrial DNA. This chain is Flap endonuclease 1, found in Debaryomyces hansenii (strain ATCC 36239 / CBS 767 / BCRC 21394 / JCM 1990 / NBRC 0083 / IGC 2968) (Yeast).